A 377-amino-acid chain; its full sequence is Putative F-box protein At3g13830 (377 aa).

Residues 6 to 52 (TTTMSTLPMVLVDEILSRVPITSLRSLRSTCKRWEAQSKTNLVGGKA) form the F-box domain.

The protein is Putative F-box protein At3g13830 of Arabidopsis thaliana (Mouse-ear cress).